A 370-amino-acid polypeptide reads, in one-letter code: Anhydro-N-acetylmuramic acid kinase (370 aa).

Position 12 to 19 (12 to 19 (GTSLDGVD)) interacts with ATP.

This sequence belongs to the anhydro-N-acetylmuramic acid kinase family.

The catalysed reaction is 1,6-anhydro-N-acetyl-beta-muramate + ATP + H2O = N-acetyl-D-muramate 6-phosphate + ADP + H(+). It participates in amino-sugar metabolism; 1,6-anhydro-N-acetylmuramate degradation. Its pathway is cell wall biogenesis; peptidoglycan recycling. In terms of biological role, catalyzes the specific phosphorylation of 1,6-anhydro-N-acetylmuramic acid (anhMurNAc) with the simultaneous cleavage of the 1,6-anhydro ring, generating MurNAc-6-P. Is required for the utilization of anhMurNAc either imported from the medium or derived from its own cell wall murein, and thus plays a role in cell wall recycling. The polypeptide is Anhydro-N-acetylmuramic acid kinase (Pectobacterium atrosepticum (strain SCRI 1043 / ATCC BAA-672) (Erwinia carotovora subsp. atroseptica)).